The primary structure comprises 208 residues: MKAVIPYKKSSAKSRLSPVLTREEREEFVDLMLNQVIDTLKEAGVGTIDILSPSMYGLENMTKANVLLDKNDLNEALNGYLEQAEEPVIIVMADLPLLSPDHVKGITSTKEDVCIVPGKGGGTNALFIKNPSCYRVRYYGSSFLTHCSIAEKTGQSVEVYDSFFAGTDIDEPEDLVELLIHGSGAAKEYISKKFRLEMSRGRVGLVHI.

This sequence belongs to the CofC family. In terms of assembly, homodimer.

The enzyme catalyses (2S)-2-phospholactate + GTP + H(+) = (2S)-lactyl-2-diphospho-5'-guanosine + diphosphate. It participates in cofactor biosynthesis; coenzyme F420 biosynthesis. In terms of biological role, guanylyltransferase that catalyzes the activation of (2S)-2-phospholactate (2-PL) as (2S)-lactyl-2-diphospho-5'-guanosine, via the condensation of 2-PL with GTP. It is involved in the biosynthesis of coenzyme F420, a hydride carrier cofactor. The protein is 2-phospho-L-lactate guanylyltransferase of Methanosarcina barkeri (strain Fusaro / DSM 804).